A 404-amino-acid chain; its full sequence is Cysteine desulfurase IscS (404 aa).

Pyridoxal 5'-phosphate contacts are provided by residues 85–86 (GT), Asn-165, Gln-193, 213–215 (SGH), and Thr-251. Cys-338 functions as the Cysteine persulfide intermediate in the catalytic mechanism. Cys-338 contributes to the [2Fe-2S] cluster binding site.

The protein belongs to the class-V pyridoxal-phosphate-dependent aminotransferase family. NifS/IscS subfamily. As to quaternary structure, homodimer. Forms a heterotetramer with IscU, interacts with other sulfur acceptors. The cofactor is pyridoxal 5'-phosphate.

It localises to the cytoplasm. The enzyme catalyses (sulfur carrier)-H + L-cysteine = (sulfur carrier)-SH + L-alanine. The protein operates within cofactor biosynthesis; iron-sulfur cluster biosynthesis. Its function is as follows. Master enzyme that delivers sulfur to a number of partners involved in Fe-S cluster assembly, tRNA modification or cofactor biosynthesis. Catalyzes the removal of elemental sulfur atoms from cysteine to produce alanine. Functions as a sulfur delivery protein for Fe-S cluster synthesis onto IscU, an Fe-S scaffold assembly protein, as well as other S acceptor proteins. The sequence is that of Cysteine desulfurase IscS from Methanosarcina thermophila.